Consider the following 157-residue polypeptide: MVKAVFPGSFDPLTFGHLDVISRSALLFDQVIVAVGINTSKTAMFTTEEKITLISNNTKNLKNVSVLPMPDLTFKFVSSVGADVIVRGIRNVRDYEYERDIAEINHRLGNVDTVLLPSKAVYQDISSSNLKEVAKFGADISHFVPENVIKLIKLKTK.

Residue Ser-9 coordinates substrate. Residues 9–10 (SF) and His-17 each bind ATP. Positions 41, 73, and 87 each coordinate substrate. ATP is bound by residues 88-90 (GIR), Glu-98, and 122-128 (YQDISSS).

Belongs to the bacterial CoaD family. As to quaternary structure, homohexamer. Requires Mg(2+) as cofactor.

The protein localises to the cytoplasm. It catalyses the reaction (R)-4'-phosphopantetheine + ATP + H(+) = 3'-dephospho-CoA + diphosphate. Its pathway is cofactor biosynthesis; coenzyme A biosynthesis; CoA from (R)-pantothenate: step 4/5. Functionally, reversibly transfers an adenylyl group from ATP to 4'-phosphopantetheine, yielding dephospho-CoA (dPCoA) and pyrophosphate. This is Phosphopantetheine adenylyltransferase from Oenococcus oeni (strain ATCC BAA-331 / PSU-1).